The following is a 563-amino-acid chain: Glucocorticoid modulatory element-binding protein 1 (563 aa).

At Ala2 the chain carries N-acetylalanine. Residues 72–156 (ASTIEANEDM…RKMMDSGQID (85 aa)) enclose the SAND domain. Residue Cys103 coordinates Zn(2+). Lys129, Lys133, Lys136, and Arg147 together coordinate DNA. His160, Cys164, and Cys168 together coordinate Zn(2+). Positions 304-355 (MDTVKKVLDNRKNQVEQGEEQFLYTLTDLERQLEEQKKQAQDHRLKSQTVQN) form a coiled coil. A disordered region spans residues 360–385 (PVSTPKPPKRPRLQRPASTTVLSPSP).

As to quaternary structure, homodimer, and heterodimer of GMEB1 and GMEB2. Interacts with TRIM63. Interacts with the glucocorticoid receptor (NR3C1) and NCOA2/TIF2. May interact with HSP27 and CREB-binding protein (CBP).

The protein resides in the nucleus. The protein localises to the cytoplasm. Its function is as follows. Trans-acting factor that binds to glucocorticoid modulatory elements (GME) present in the TAT (tyrosine aminotransferase) promoter and increases sensitivity to low concentrations of glucocorticoids. Also binds to the transferrin receptor promoter. The protein is Glucocorticoid modulatory element-binding protein 1 (GMEB1) of Bos taurus (Bovine).